The following is a 131-amino-acid chain: D-ribose pyranase (131 aa).

Catalysis depends on histidine 20, which acts as the Proton donor. Substrate contacts are provided by residues aspartate 28, histidine 98, and 120 to 122 (YSN).

Belongs to the RbsD / FucU family. RbsD subfamily. In terms of assembly, homodecamer.

Its subcellular location is the cytoplasm. The catalysed reaction is beta-D-ribopyranose = beta-D-ribofuranose. It participates in carbohydrate metabolism; D-ribose degradation; D-ribose 5-phosphate from beta-D-ribopyranose: step 1/2. Its function is as follows. Catalyzes the interconversion of beta-pyran and beta-furan forms of D-ribose. This is D-ribose pyranase from Lactobacillus johnsonii (strain CNCM I-12250 / La1 / NCC 533).